We begin with the raw amino-acid sequence, 255 residues long: Ciliogenesis and planar polarity effector 2 (255 aa).

A small GTPase-like region spans residues 52–255 (PADIASYKLF…VIAGLVGGAD (204 aa)). Residues 64 to 71 (GRSGAGKT) and 177 to 180 (TKLD) contribute to the GTP site.

Belongs to the small GTPase superfamily. Rab family.

Its subcellular location is the cytoplasm. The protein resides in the cytoskeleton. The protein localises to the cilium basal body. In terms of biological role, potential effector of the planar cell polarity signaling pathway. Plays a role in targeted membrane trafficking most probably at the level of vesicle fusion with membranes. Involved in cilium biogenesis by regulating the transport of cargo proteins to the basal body and to the apical tips of cilia. More generally involved in exocytosis in secretory cells. The sequence is that of Ciliogenesis and planar polarity effector 2 (cplane2) from Xenopus tropicalis (Western clawed frog).